Here is a 256-residue protein sequence, read N- to C-terminus: Cytokine-inducible SH2-containing protein (256 aa).

One can recognise an SH2 domain in the interval 81-162; that stretch reads WYWGSITASE…PDVVSLVQHY (82 aa). The disordered stretch occupies residues 168-190; it reads ADTRSDSPDPAPTPALPVSKPDA. The SOCS box domain maps to 207 to 255; it reads KLVQPFVRRSSARSLQHLCRLVINRLVTDVDCLPLPRRMADYLRQYPFQ.

As to quaternary structure, stably associated with the tyrosine-phosphorylated IL3 receptor beta chain and tyrosine-phosphorylated EPO receptor (EPOR).

Its pathway is protein modification; protein ubiquitination. In terms of biological role, SOCS family proteins form part of a classical negative feedback system that regulates cytokine signal transduction. CIS is involved in the negative regulation of cytokines that signal through the JAK-STAT5 pathway such as erythropoietin, prolactin and interleukin 3 (IL3) receptor. Inhibits STAT5 trans-activation by suppressing its tyrosine phosphorylation. May be a substrate recognition component of a SCF-like ECS (Elongin BC-CUL2/5-SOCS-box protein) E3 ubiquitin-protein ligase complex which mediates the ubiquitination and subsequent proteasomal degradation of target proteins. The chain is Cytokine-inducible SH2-containing protein (Cish) from Rattus norvegicus (Rat).